A 157-amino-acid chain; its full sequence is Crossover junction endodeoxyribonuclease RuvC (157 aa).

Catalysis depends on residues Asp-7, Glu-66, and Asp-139. 3 residues coordinate Mg(2+): Asp-7, Glu-66, and Asp-139.

Belongs to the RuvC family. As to quaternary structure, homodimer which binds Holliday junction (HJ) DNA. The HJ becomes 2-fold symmetrical on binding to RuvC with unstacked arms; it has a different conformation from HJ DNA in complex with RuvA. In the full resolvosome a probable DNA-RuvA(4)-RuvB(12)-RuvC(2) complex forms which resolves the HJ. Mg(2+) serves as cofactor.

It localises to the cytoplasm. The catalysed reaction is Endonucleolytic cleavage at a junction such as a reciprocal single-stranded crossover between two homologous DNA duplexes (Holliday junction).. Its function is as follows. The RuvA-RuvB-RuvC complex processes Holliday junction (HJ) DNA during genetic recombination and DNA repair. Endonuclease that resolves HJ intermediates. Cleaves cruciform DNA by making single-stranded nicks across the HJ at symmetrical positions within the homologous arms, yielding a 5'-phosphate and a 3'-hydroxyl group; requires a central core of homology in the junction. The consensus cleavage sequence is 5'-(A/T)TT(C/G)-3'. Cleavage occurs on the 3'-side of the TT dinucleotide at the point of strand exchange. HJ branch migration catalyzed by RuvA-RuvB allows RuvC to scan DNA until it finds its consensus sequence, where it cleaves and resolves the cruciform DNA. The chain is Crossover junction endodeoxyribonuclease RuvC from Campylobacter curvus (strain 525.92).